The primary structure comprises 1067 residues: Receptor-type guanylate cyclase gcy-10 (1067 aa).

A signal peptide spans M1–G20. The Extracellular segment spans residues I21–Y438. N411 carries N-linked (GlcNAc...) asparagine glycosylation. A helical transmembrane segment spans residues I439 to I459. Topologically, residues V460–A1067 are cytoplasmic. One can recognise a Protein kinase domain in the interval A509–S791. ATP contacts are provided by residues R515 to V523 and K534. One can recognise a Guanylate cyclase domain in the interval T859–Q989.

It belongs to the adenylyl cyclase class-4/guanylyl cyclase family. Expressed predominantly in AWC but also in AWB, ASI, ASJ and ASK sensory neurons and in I1 interneuron.

Its subcellular location is the cell membrane. The protein localises to the cell projection. The protein resides in the cilium. It catalyses the reaction GTP = 3',5'-cyclic GMP + diphosphate. Functionally, guanylate cyclase involved in the production of the second messenger cGMP. Regulates chemotaxis responses toward volatile odorants in AWC sensory neurons and their avoidance in AWB sensory neurons. May be involved in sensitivity to quinine by regulating egl-4 activity through the production of cGMP. Involved in phototransduction in ASJ neurons downstream of G protein coupled-photoreceptor lite-1. Required to maintain the expression of putative olfactory receptor str-2 in AWC neurons in adults. In AWB and AWC sensory neurons, mediates the recognition of food oders which subsequently allows for the detection of preferred food sources. Involved in AWB sensory neuron development and extension during postembryonic development, potentially via mediating localization of tub-1 and PI(4,5)P2 to membrane cilia. This chain is Receptor-type guanylate cyclase gcy-10, found in Caenorhabditis elegans.